The primary structure comprises 325 residues: MSKRIYSRIAGTGSYLPEKVLTNDDMSKIVDTSDEWIFSRTGIRERHIAADDQATSDLAYFASLKAMEAAGVTADEIDLIVIGTTTPDLIFPSTACLLQARLGNVGCGAMDVNAACSGFVYALSVADKFVRSGDAKTVLVVGAETLTRILDWTDRTTCVLFGDGAGAVILKADEETGILSTHLRADGSKKELLWDPVGVSVGFGEGKNGGGALLMKGNDVFKYAVKALNSVVDETLAANGYDAHDLDWLIPHQANLRIIEATAKRLDLPMEQVVVTVDRHGNTSSASVPLALDEAVRSGRVQRGQLLLLEAFGGGFAWGSALLRY.

Catalysis depends on residues Cys-116 and His-252. The segment at 253-257 is ACP-binding; that stretch reads QANLR. Asn-282 is an active-site residue.

This sequence belongs to the thiolase-like superfamily. FabH family. As to quaternary structure, homodimer.

Its subcellular location is the cytoplasm. The catalysed reaction is malonyl-[ACP] + acetyl-CoA + H(+) = 3-oxobutanoyl-[ACP] + CO2 + CoA. It participates in lipid metabolism; fatty acid biosynthesis. Its function is as follows. Catalyzes the condensation reaction of fatty acid synthesis by the addition to an acyl acceptor of two carbons from malonyl-ACP. Catalyzes the first condensation reaction which initiates fatty acid synthesis and may therefore play a role in governing the total rate of fatty acid production. Possesses both acetoacetyl-ACP synthase and acetyl transacylase activities. Its substrate specificity determines the biosynthesis of branched-chain and/or straight-chain of fatty acids. This chain is Beta-ketoacyl-[acyl-carrier-protein] synthase III, found in Xanthomonas oryzae pv. oryzae (strain MAFF 311018).